We begin with the raw amino-acid sequence, 458 residues long: Alpha-2C adrenergic receptor (458 aa).

The Extracellular segment spans residues 1–51 (MASPALAAALAAAAAEGPNGSDAGEWGSGGGANASGTDWVPPPGQYSAGAV). N-linked (GlcNAc...) asparagine glycans are attached at residues Asn-19 and Asn-33. Residues 52 to 76 (AGLAAVVGFLIVFTVVGNVLVVIAV) form a helical membrane-spanning segment. Topologically, residues 77–88 (LTSRALRAPQNL) are cytoplasmic. Residues 89 to 114 (FLVSLASADILVATLVMPFSLANELM) form a helical membrane-spanning segment. At 115 to 124 (AYWYFGQVWC) the chain is on the extracellular side. A disulfide bridge links Cys-124 with Cys-202. The chain crosses the membrane as a helical span at residues 125-147 (GVYLALDVLFCTSSIVHLCAISL). Topologically, residues 148–168 (DRYWSVTQAVEYNLKRTPRRV) are cytoplasmic. Residues 169-191 (KATIVAVWLISAVISFPPLVSFY) traverse the membrane as a helical segment. Residues 192 to 207 (RRPDGAAYPQCGLNDE) are Extracellular-facing. The helical transmembrane segment at 208 to 231 (TWYILSSCIGSFFAPCLIMGLVYA) threads the bilayer. At 232–379 (RIYRVAKLRT…QAREKRFTFV (148 aa)) the chain is on the cytoplasmic side. The segment at 245–343 (SEKRGPAGPD…SPGPGGRLSR (99 aa)) is disordered. Residues 291–303 (RRRRRGALRRGGR) are compositionally biased toward basic residues. Residues 380–403 (LAVVMGVFVLCWFPFFFSYSLYGI) form a helical membrane-spanning segment. Topologically, residues 404 to 416 (CREACQLPEPLFK) are extracellular. Residues 417 to 437 (FFFWIGYCNSSLNPVIYTVFN) form a helical membrane-spanning segment. The Cytoplasmic portion of the chain corresponds to 438 to 458 (QDFRRSFKHILFRRRRRGFRQ).

This sequence belongs to the G-protein coupled receptor 1 family. Adrenergic receptor subfamily. ADRA2C sub-subfamily.

It localises to the cell membrane. Functionally, alpha-2 adrenergic receptors mediate the catecholamine-induced inhibition of adenylate cyclase through the action of G proteins. The protein is Alpha-2C adrenergic receptor (Adra2c) of Mus musculus (Mouse).